Here is a 190-residue protein sequence, read N- to C-terminus: Potassium-transporting ATPase KdpC subunit (190 aa).

The chain crosses the membrane as a helical span at residues 6–26; sequence PAVFLVLLLTLITGLLYPLLT. The interval 67–88 is disordered; the sequence is GRPSATSDRPYNPLASSGSNLA. Polar residues predominate over residues 69–88; the sequence is PSATSDRPYNPLASSGSNLA.

This sequence belongs to the KdpC family. As to quaternary structure, the system is composed of three essential subunits: KdpA, KdpB and KdpC.

Its subcellular location is the cell inner membrane. Its function is as follows. Part of the high-affinity ATP-driven potassium transport (or Kdp) system, which catalyzes the hydrolysis of ATP coupled with the electrogenic transport of potassium into the cytoplasm. This subunit acts as a catalytic chaperone that increases the ATP-binding affinity of the ATP-hydrolyzing subunit KdpB by the formation of a transient KdpB/KdpC/ATP ternary complex. This chain is Potassium-transporting ATPase KdpC subunit, found in Erwinia tasmaniensis (strain DSM 17950 / CFBP 7177 / CIP 109463 / NCPPB 4357 / Et1/99).